The chain runs to 129 residues: Small ribosomal subunit protein uS11 (129 aa).

The protein belongs to the universal ribosomal protein uS11 family. As to quaternary structure, part of the 30S ribosomal subunit. Interacts with proteins S7 and S18. Binds to IF-3.

Located on the platform of the 30S subunit, it bridges several disparate RNA helices of the 16S rRNA. Forms part of the Shine-Dalgarno cleft in the 70S ribosome. This Pectobacterium atrosepticum (strain SCRI 1043 / ATCC BAA-672) (Erwinia carotovora subsp. atroseptica) protein is Small ribosomal subunit protein uS11.